A 191-amino-acid chain; its full sequence is General negative regulator of transcription subunit 2 (191 aa).

This sequence belongs to the CNOT2/3/5 family. In terms of assembly, forms a NOT protein complex that comprises NOT1, NOT2, NOT3, NOT4 and NOT5. Subunit of the 1.0 MDa CCR4-NOT core complex that contains CCR4, CAF1, NOT1, NOT2, NOT3, NOT4, NOT5, CAF40 and CAF130. In the complex interacts with NOT1 and NOT5. The core complex probably is part of a less characterized 1.9 MDa CCR4-NOT complex.

Its subcellular location is the cytoplasm. It localises to the nucleus. In terms of biological role, acts as a component of the CCR4-NOT core complex, which in the nucleus seems to be a general transcription factor, and in the cytoplasm the major mRNA deadenylase involved in mRNA turnover. NOT2 is required for the integrity of the complex. The NOT protein subcomplex negatively regulates the basal and activated transcription of many genes. Preferentially affects TC-type TATA element-dependent transcription. Could directly or indirectly inhibit component(s) of the general transcription machinery. The sequence is that of General negative regulator of transcription subunit 2 (CDC36) from Saccharomyces cerevisiae (strain ATCC 204508 / S288c) (Baker's yeast).